A 347-amino-acid chain; its full sequence is Guanine nucleotide-binding protein alpha-5 subunit (347 aa).

Gly-2 carries the N-myristoyl glycine lipid modification. The S-palmitoyl cysteine moiety is linked to residue Cys-3. The G-alpha domain occupies 27–347 (NETKLLLLGP…KNIFNTIINY (321 aa)). Residues 30 to 43 (KLLLLGPGESGKST) are G1 motif. GTP contacts are provided by residues 35–42 (GPGESGKS), 170–176 (LRSRVRT), 195–199 (DVGGQ), 264–267 (NKVD), and Ala-319. 2 residues coordinate Mg(2+): Ser-42 and Thr-176. Residues 168–176 (DVLRSRVRT) form a G2 motif region. The interval 191–200 (FRMLDVGGQR) is G3 motif. A G4 motif region spans residues 260–267 (IIFFNKVD). A G5 motif region spans residues 317–322 (TCAIDT).

It belongs to the G-alpha family. G(q) subfamily. G proteins are composed of 3 units; alpha, beta and gamma. The alpha chain contains the guanine nucleotide binding site.

Guanine nucleotide-binding proteins (G proteins) are involved as modulators or transducers in various transmembrane signaling systems. The sequence is that of Guanine nucleotide-binding protein alpha-5 subunit (gpaE) from Dictyostelium discoideum (Social amoeba).